Here is a 2190-residue protein sequence, read N- to C-terminus: Non-reducing polyketide synthase mapC' (2190 aa).

Residues 14-268 (VLFGPQCPDI…HHEAHREGIQ (255 aa)) form an N-terminal acylcarrier protein transacylase domain (SAT) region. In terms of domain architecture, Ketosynthase family 3 (KS3) spans 401 to 817 (ASPIAITGMA…GSNAALIVKE (417 aa)). Residues cysteine 566, histidine 701, and histidine 740 each act as for beta-ketoacyl synthase activity in the active site. Positions 893–1190 (CFGGQNGLTA…NVTSALWAQG (298 aa)) are malonyl-CoA:ACP transacylase (MAT) domain. The active-site For acyl/malonyl transferase activity is serine 979. An N-terminal hotdog fold region spans residues 1243 to 1375 (GQEAGLLCQL…GTVCLHQERS (133 aa)). Residues 1243 to 1552 (GQEAGLLCQL…FTSVSIRSLT (310 aa)) form the PKS/mFAS DH domain. Residues 1251-1556 (QLSESPDERL…SIRSLTRALA (306 aa)) form a product template (PT) domain region. Histidine 1277 functions as the Proton acceptor; for dehydratase activity in the catalytic mechanism. The C-terminal hotdog fold stretch occupies residues 1401–1552 (ASNGLKGSTV…FTSVSIRSLT (152 aa)). The active-site Proton donor; for dehydratase activity is the aspartate 1458. The 75-residue stretch at 1597–1671 (ANDLATVQEM…GLVEHIFPGH (75 aa)) folds into the Carrier domain. At serine 1631 the chain carries O-(pantetheine 4'-phosphoryl)serine. Residues 1840 to 2187 (ATMSPSKPIK…AEGYEFLRTH (348 aa)) form a methyltransferase (CMeT) domain region. Catalysis depends on for thioesterase activity residues serine 1969, aspartate 2127, and histidine 2159.

It is found in the cytoplasm. It localises to the cytosol. The enzyme catalyses 3 malonyl-CoA + acetyl-CoA + S-adenosyl-L-methionine + H(+) = 5-methylorsellinate + S-adenosyl-L-homocysteine + 3 CO2 + 4 CoA. Its pathway is secondary metabolite biosynthesis; terpenoid biosynthesis. Functionally, non-reducing polyketide synthase; part of the gene cluster that mediates the biosynthesis of mycophenolic acid (MPA), the first isolated antibiotic natural product in the world obtained from a culture of Penicillium brevicompactum in 1893. MpaC' catalyzes the synthesis of 5-methylorsellinic acid (5MOA) via the condensation of 1 acetyl-CoA starter unit with 3 malonyl-CoA units and one methylation step. The first step of the pathway is the synthesis of 5-methylorsellinic acid (5MOA) by the cytosolic polyketide synthase mpaC. 5MOA is then converted to the phthalide compound 5,7-dihydroxy-4,6-dimethylphthalide (DHMP) by the endoplasmic reticulum-bound cytochrome P450 monooxygenase mpaDE. MpaDE first catalyzes hydroxylation of 5-MOA to 4,6-dihydroxy-2-(hydroxymethyl)-3-methylbenzoic acid (DHMB). MpaDE then acts as a lactone synthase that catalyzes the ring closure to convert DHMB into DHMP. The next step is the prenylation of DHMP by the Golgi apparatus-associated prenyltransferase mpaA to yield farnesyl-DHMP (FDHMP). The ER-bound oxygenase mpaB then mediates the oxidative cleavage the C19-C20 double bond in FDHMP to yield FDHMP-3C via a mycophenolic aldehyde intermediate. The O-methyltransferase mpaG catalyzes the methylation of FDHMP-3C to yield MFDHMP-3C. After the cytosolic methylation of FDHMP-3C, MFDHMP-3C enters into peroxisomes probably via free diffusion due to its low molecular weight. Upon a peroxisomal CoA ligation reaction, catalyzed by a beta-oxidation component enzyme acyl-CoA ligase ACL891, MFDHMP-3C-CoA would then be restricted to peroxisomes for the following beta-oxidation pathway steps. The peroxisomal beta-oxidation machinery than converts MFDHMP-3C-CoA into MPA_CoA, via a beta-oxidation chain-shortening process. Finally mpaH acts as a peroxisomal acyl-CoA hydrolase with high substrate specificity toward MPA-CoA to release the final product MPA. The sequence is that of Non-reducing polyketide synthase mapC' from Penicillium brevicompactum.